Consider the following 62-residue polypeptide: MIPVRCFTCGKVISTAWEEFKQRRDAGEDPGAILDDLGLTQYCCRRMLLTHKEIIDELNPYQ.

The Zn(2+) site is built by Cys6, Cys9, Cys43, and Cys44.

It belongs to the archaeal Rpo10/eukaryotic RPB10 RNA polymerase subunit family. As to quaternary structure, part of the RNA polymerase complex. Requires Zn(2+) as cofactor.

Its subcellular location is the cytoplasm. The catalysed reaction is RNA(n) + a ribonucleoside 5'-triphosphate = RNA(n+1) + diphosphate. Functionally, DNA-dependent RNA polymerase (RNAP) catalyzes the transcription of DNA into RNA using the four ribonucleoside triphosphates as substrates. This is DNA-directed RNA polymerase subunit Rpo10 from Methanosphaerula palustris (strain ATCC BAA-1556 / DSM 19958 / E1-9c).